The chain runs to 192 residues: Thymidine kinase (192 aa).

ATP is bound by residues 9 to 16 (SAMNAGKS) and 87 to 90 (DECQ). Catalysis depends on glutamate 88, which acts as the Proton acceptor. Cysteine 145, cysteine 147, cysteine 182, and histidine 185 together coordinate Zn(2+).

The protein belongs to the thymidine kinase family. In terms of assembly, homotetramer.

Its subcellular location is the cytoplasm. It catalyses the reaction thymidine + ATP = dTMP + ADP + H(+). This is Thymidine kinase from Vibrio vulnificus (strain YJ016).